The following is a 344-amino-acid chain: Meiotic recombination protein DMC1 homolog A (344 aa).

Residue 133-140 (GEFRSGKT) participates in ATP binding. Arginine 235 provides a ligand contact to dsDNA. The ssDNA site is built by arginine 235, phenylalanine 238, arginine 241, arginine 247, and arginine 315. DsDNA contacts are provided by arginine 241 and arginine 247.

The protein belongs to the RecA family. DMC1 subfamily. As to expression, expressed in pollen mother cells and root tips.

It localises to the nucleus. Functionally, recombinase that may participate in meiotic recombination, specifically in homologous strand assimilation, which is required for the resolution of meiotic double-strand breaks. Exhibits DNA-dependent ATPase activity when bound to single-stranded DNA (ssDNA). Mediates renaturation of homologous complementary strands as well as assimilation of single strands into homologous supercoiled duplexes leading to D-loop formation. Binds circular single-stranded DNA (ssDNA) and circular double-stranded DNA (dsDNA) in vitro. Catalyzes DNA homologous renaturation and DNA strand exchange. The rates of these activities are dependent on the state of ATP hydrolysis. Forms helical filaments along ssDNA and dsDNA, and promotes strand exchange between ssDNA and dsDNA with long DNA substrates of several thousand base pairs. The presence of the replication protein A is not required for this activity. Seems to be required for homologous pairing and subsequent chromosome segregation during male meiosis. May be not directly required for homologous pairing during male meiosis. Required for synaptonemal complex assembly and crossover formation. Functions redundantly with DMC1B. This chain is Meiotic recombination protein DMC1 homolog A, found in Oryza sativa subsp. indica (Rice).